The primary structure comprises 438 residues: Aspartic proteinase nepenthesin-2 (438 aa).

The signal sequence occupies residues 1–24 (MASPLYSVVLGLAIVSAIVAPTSS). Positions 25-79 (TSRGTLLHHGQKRPQPGLRVDLEQVDSGKNLTKYELIKRAIKRGERRMRSINAML) are cleaved as a propeptide — activation peptide. A glycan (N-linked (GlcNAc...) asparagine) is linked at Asn-54. The 336-residue stretch at 96–431 (YLMNVAIGTP…DLQNLAVSFV (336 aa)) folds into the Peptidase A1 domain. Asp-114 is an active-site residue. 6 cysteine pairs are disulfide-bonded: Cys-124–Cys-127, Cys-130–Cys-204, Cys-151–Cys-169, Cys-156–Cys-164, Cys-241–Cys-435, and Cys-354–Cys-395. Asp-315 is an active-site residue.

It belongs to the peptidase A1 family.

The protein localises to the secreted. The enzyme catalyses Similar to pepsin, but also cleaves on either side of Asp and at Lys-|-Arg.. With respect to regulation, inhibited by pepstatin and by diazoacetyl-D,L-norleucine methyl ester (DAN) in the presence of Cu(2+) ions. Extracellular proteinase found in the pitcher fluid of carnivorous plants. Digest prey for nitrogen uptake. The protein is Aspartic proteinase nepenthesin-2 (nep2) of Nepenthes gracilis (Slender pitcher plant).